The primary structure comprises 557 residues: CTP synthase (557 aa).

The tract at residues 1–270 (MTKYVFVTGG…DAIICEELKL (270 aa)) is amidoligase domain. A CTP-binding site is contributed by Ser-13. Ser-13 is a binding site for UTP. Residues 14–19 (SLGKGI) and Asp-71 contribute to the ATP site. Asp-71 and Glu-144 together coordinate Mg(2+). Residues 151 to 153 (DIE), 191 to 196 (KTKPTQ), and Lys-227 contribute to the CTP site. UTP-binding positions include 191-196 (KTKPTQ) and Lys-227. The Glutamine amidotransferase type-1 domain occupies 295 to 547 (TIGMVGKYVD…VEAALAHHEA (253 aa)). Gly-356 contributes to the L-glutamine binding site. The active-site Nucleophile; for glutamine hydrolysis is Cys-383. L-glutamine contacts are provided by residues 384–387 (LGMQ), Glu-407, and Arg-473. Catalysis depends on residues His-520 and Glu-522.

It belongs to the CTP synthase family. As to quaternary structure, homotetramer.

It carries out the reaction UTP + L-glutamine + ATP + H2O = CTP + L-glutamate + ADP + phosphate + 2 H(+). The enzyme catalyses L-glutamine + H2O = L-glutamate + NH4(+). It catalyses the reaction UTP + NH4(+) + ATP = CTP + ADP + phosphate + 2 H(+). Its pathway is pyrimidine metabolism; CTP biosynthesis via de novo pathway; CTP from UDP: step 2/2. Allosterically activated by GTP, when glutamine is the substrate; GTP has no effect on the reaction when ammonia is the substrate. The allosteric effector GTP functions by stabilizing the protein conformation that binds the tetrahedral intermediate(s) formed during glutamine hydrolysis. Inhibited by the product CTP, via allosteric rather than competitive inhibition. Its function is as follows. Catalyzes the ATP-dependent amination of UTP to CTP with either L-glutamine or ammonia as the source of nitrogen. Regulates intracellular CTP levels through interactions with the four ribonucleotide triphosphates. The protein is CTP synthase of Paraburkholderia phytofirmans (strain DSM 17436 / LMG 22146 / PsJN) (Burkholderia phytofirmans).